Here is a 1019-residue protein sequence, read N- to C-terminus: StAR-related lipid transfer protein 8 (1019 aa).

2 disordered regions span residues 92–122 (QPLL…KVKK) and 134–154 (SLRR…CLAT). Residues 100-115 (SPSNQPFLSPPQGQEG) show a composition bias toward polar residues. Serine 108 is subject to Phosphoserine. Residues 134-147 (SLRRKEKGDSRQTE) show a composition bias toward basic and acidic residues. Arginine 168 carries the asymmetric dimethylarginine modification. Residues serine 234 and serine 237 each carry the phosphoserine modification. 2 disordered regions span residues 325–355 (MYPD…EVAT) and 406–482 (APAQ…VGAS). Residues 334–347 (KEEEEEEEEEEEEA) are compositionally biased toward acidic residues. Composition is skewed to polar residues over residues 418 to 430 (NSTA…SSLS) and 437 to 455 (ISDT…NSMN). 2 positions are modified to phosphoserine: serine 494 and serine 502. In terms of domain architecture, Rho-GAP spans 569–773 (PPLIHVQRTG…HMISDCKKLF (205 aa)). The tract at residues 731-754 (DSSSPRIKSKRSLVGRPGPRDLSE) is disordered. Residues 805 to 1013 (AQAAGVSLSL…RDSFPTLQAA (209 aa)) enclose the START domain.

As to quaternary structure, binds both the SH2 and PTB domains of TNS1.

It is found in the cell junction. The protein resides in the focal adhesion. In terms of biological role, accelerates GTPase activity of RHOA and CDC42, but not RAC1. Stimulates the hydrolysis of phosphatidylinositol 4,5-bisphosphate by PLCD1. The chain is StAR-related lipid transfer protein 8 (Stard8) from Mus musculus (Mouse).